We begin with the raw amino-acid sequence, 213 residues long: ATP-dependent dethiobiotin synthetase BioD (213 aa).

An ATP-binding site is contributed by 12–17 (EVGKTY). Thr-16 contacts Mg(2+). The active site involves Lys-37. ATP is bound by residues Asp-46, 107–110 (EGVG), and 167–168 (NN). Residues Asp-46 and Glu-107 each contribute to the Mg(2+) site.

It belongs to the dethiobiotin synthetase family. As to quaternary structure, homodimer. The cofactor is Mg(2+).

The protein resides in the cytoplasm. It carries out the reaction (7R,8S)-7,8-diammoniononanoate + CO2 + ATP = (4R,5S)-dethiobiotin + ADP + phosphate + 3 H(+). It participates in cofactor biosynthesis; biotin biosynthesis; biotin from 7,8-diaminononanoate: step 1/2. Its function is as follows. Catalyzes a mechanistically unusual reaction, the ATP-dependent insertion of CO2 between the N7 and N8 nitrogen atoms of 7,8-diaminopelargonic acid (DAPA, also called 7,8-diammoniononanoate) to form a ureido ring. The polypeptide is ATP-dependent dethiobiotin synthetase BioD (Akkermansia muciniphila (strain ATCC BAA-835 / DSM 22959 / JCM 33894 / BCRC 81048 / CCUG 64013 / CIP 107961 / Muc)).